We begin with the raw amino-acid sequence, 236 residues long: EEF1A lysine methyltransferase 2 (236 aa).

The segment covering 1 to 11 has biased composition (gly residues); it reads MSSGADGGGGA. The interval 1-31 is disordered; it reads MSSGADGGGGAAVAARSDKGSPGEDGFVPSA. The residue at position 2 (S2) is an N-acetylserine. Position 21 is a phosphoserine (S21).

The protein belongs to the class I-like SAM-binding methyltransferase superfamily. EFM4 family.

Its subcellular location is the cytoplasm. The protein localises to the nucleus. The enzyme catalyses L-lysyl-[protein] + 3 S-adenosyl-L-methionine = N(6),N(6),N(6)-trimethyl-L-lysyl-[protein] + 3 S-adenosyl-L-homocysteine + 3 H(+). Protein-lysine methyltransferase that selectively catalyzes the trimethylation of EEF1A at 'Lys-318'. In Homo sapiens (Human), this protein is EEF1A lysine methyltransferase 2.